The sequence spans 89 residues: MDKQLADTFTQLSQQNGVVGYCCVDESGLCLKAHGNKQSSNAGFYKSLLDKSKFLTQSGEPANIVIETDTANIFIQQNDKITLSVSKLP.

Belongs to the LAMTOR5 family. As to quaternary structure, part of the Ragulator complex.

The protein resides in the cytoplasm. Its subcellular location is the lysosome. In terms of biological role, regulator of the TOR pathway, a signaling cascade that promotes cell growth in response to growth factors, energy levels, and amino acids. As part of the Ragulator complex, may activate the TOR signaling cascade in response to amino acids. In Dictyostelium discoideum (Social amoeba), this protein is Ragulator complex protein LAMTOR5 homolog.